The primary structure comprises 635 residues: Sodium- and chloride-dependent creatine transporter 1 (635 aa).

The disordered stretch occupies residues 1 to 35 (MAKKSAENGIYSVSGDEKKGPLIAPGPDGAPAKGD). Residues 1–60 (MAKKSAENGIYSVSGDEKKGPLIAPGPDGAPAKGDGPAGLGAPGGCLAVPPRETWTRQMD) are Cytoplasmic-facing. Over residues 25-35 (PGPDGAPAKGD) the composition is skewed to low complexity. A helical transmembrane segment spans residues 61–81 (FIMSCVGFAVGLGNVWRFPYL). Residues 82–87 (CYKNGG) lie on the Extracellular side of the membrane. A helical membrane pass occupies residues 88–108 (GVFLIPYVLIALVGGIPIFFL). Topologically, residues 109–138 (EISLGQFMKAGSINVWNICPLFKGLGYASM) are cytoplasmic. A helical transmembrane segment spans residues 139 to 159 (VIVFYCNTYYIMVLAWGFYYL). The Extracellular segment spans residues 160–230 (VKSFTTTLPW…LSGGLEVPGA (71 aa)). Asn192 and Asn197 each carry an N-linked (GlcNAc...) asparagine glycan. A helical membrane pass occupies residues 231 to 251 (LNSEVTLCLLACWVLVYFCVW). At 252–269 (KGVKSTGKIVYFTATFPY) the chain is on the cytoplasmic side. A helical membrane pass occupies residues 270-290 (VVLVVLLVRGVLLPGALDGII). Residues 291–304 (YYLKPDWSKLRSPQ) lie on the Extracellular side of the membrane. The chain crosses the membrane as a helical span at residues 305-325 (VWIDAGTQIFFSYAIGLGALT). Residues 326–341 (ALGSYNRFNNNCYKDA) lie on the Cytoplasmic side of the membrane. Residues 342–362 (IILALINSGTSFFAGFVVFSI) form a helical membrane-spanning segment. The Extracellular segment spans residues 363–394 (LGFMATEQGVHISKVAESGPGLAFIAYPRAVT). A helical membrane pass occupies residues 395–415 (LMPVAPLWAALFFFMLLLLGL). Topologically, residues 416 to 444 (DSQFVGVEGFITGLLDLLPASYYFRFQRE) are cytoplasmic. The helical transmembrane segment at 445 to 465 (ISVALCCALCFVIDLSMVQMA) threads the bilayer. Over 466–479 (GMYVFQLFDYYSAS) the chain is Extracellular. A helical membrane pass occupies residues 480–500 (GTTLLWQAFWECVAVAWVYGA). Residues 501–520 (DRFMDDIACMIGYRPCPWMK) lie on the Cytoplasmic side of the membrane. The chain crosses the membrane as a helical span at residues 521-541 (WCWSFFTPLVCMGIFIFNIVY). The Extracellular segment spans residues 542-560 (YKPLVYNKTYVYPWWGEAM). Asn548 carries N-linked (GlcNAc...) asparagine glycosylation. A helical transmembrane segment spans residues 561–581 (GWAFALSSMLCVPLHLLGCLL). Residues 582–635 (RAKGTMAERWQHLTQPVWGLHHLEYRAQDADVRGLTTLTPVSESSKVVVVESVM) are Cytoplasmic-facing. Thr617 and Thr620 each carry phosphothreonine. Ser623 carries the post-translational modification Phosphoserine.

It belongs to the sodium:neurotransmitter symporter (SNF) (TC 2.A.22) family. SLC6A8 subfamily. Post-translationally, glycosylated. In terms of tissue distribution, prominent in kidney, heart, and muscle, also present in brain, but not in liver and intestine.

It localises to the cell membrane. It is found in the apical cell membrane. It carries out the reaction creatine(out) + chloride(out) + 2 Na(+)(out) = creatine(in) + chloride(in) + 2 Na(+)(in). Functionally, creatine:sodium symporter which mediates the uptake of creatine. Plays an important role in supplying creatine to the brain via the blood-brain barrier. The chain is Sodium- and chloride-dependent creatine transporter 1 (SLC6A8) from Oryctolagus cuniculus (Rabbit).